A 288-amino-acid chain; its full sequence is Eukaryotic translation initiation factor 3 subunit G (288 aa).

Residues 1–33 are disordered; sequence MSRVANNRDWADDEDLEDSNELPQSTTTTNKDG. The segment covering 11 to 20 has biased composition (acidic residues); the sequence is ADDEDLEDSN. The span at 21 to 33 shows a compositional bias: polar residues; the sequence is ELPQSTTTTNKDG. Positions 208–286 constitute an RRM domain; sequence ATLRVTNVSE…LILRVEFAKK (79 aa).

The protein belongs to the eIF-3 subunit G family. Component of the eukaryotic translation initiation factor 3 (eIF-3) complex.

Its subcellular location is the cytoplasm. Its function is as follows. RNA-binding component of the eukaryotic translation initiation factor 3 (eIF-3) complex, which is involved in protein synthesis of a specialized repertoire of mRNAs and, together with other initiation factors, stimulates binding of mRNA and methionyl-tRNAi to the 40S ribosome. The eIF-3 complex specifically targets and initiates translation of a subset of mRNAs involved in cell proliferation. This subunit can bind 18S rRNA. The protein is Eukaryotic translation initiation factor 3 subunit G (tif35) of Sclerotinia sclerotiorum (strain ATCC 18683 / 1980 / Ss-1) (White mold).